A 366-amino-acid chain; its full sequence is Histidinol-phosphate aminotransferase 2 (366 aa).

The segment at 1–21 is disordered; sequence MQVKDQLSLLQPYKPGKSPEQ. An N6-(pyridoxal phosphate)lysine modification is found at Lys222.

The protein belongs to the class-II pyridoxal-phosphate-dependent aminotransferase family. Histidinol-phosphate aminotransferase subfamily. As to quaternary structure, homodimer. The cofactor is pyridoxal 5'-phosphate.

The enzyme catalyses L-histidinol phosphate + 2-oxoglutarate = 3-(imidazol-4-yl)-2-oxopropyl phosphate + L-glutamate. The protein operates within amino-acid biosynthesis; L-histidine biosynthesis; L-histidine from 5-phospho-alpha-D-ribose 1-diphosphate: step 7/9. The chain is Histidinol-phosphate aminotransferase 2 from Bacillus cereus (strain ZK / E33L).